The chain runs to 581 residues: Arginine--tRNA ligase (581 aa).

The 'HIGH' region motif lies at 122-132 (PNVAKPMHVGH).

Belongs to the class-I aminoacyl-tRNA synthetase family. Monomer.

Its subcellular location is the cytoplasm. The catalysed reaction is tRNA(Arg) + L-arginine + ATP = L-arginyl-tRNA(Arg) + AMP + diphosphate. The sequence is that of Arginine--tRNA ligase from Francisella tularensis subsp. holarctica (strain FTNF002-00 / FTA).